The sequence spans 2130 residues: DNA polymerase zeta catalytic subunit (2130 aa).

4 disordered regions span residues 528 to 635 (PAES…TGTL), 734 to 891 (GCEI…HDEA), 927 to 954 (FTPSSGIRPPETETTPQLSPKSNESNTP), and 1189 to 1243 (QAKD…SAAQ). Positions 553-574 (TPIKSISSKSKSSPSKTPTTPI) are enriched in low complexity. The segment covering 620–629 (PRLSLQLDQG) has biased composition (polar residues). The segment covering 735-753 (CEIERPHRSEGSALDELKP) has biased composition (basic and acidic residues). 3 stretches are compositionally biased toward polar residues: residues 771-786 (SEIQTTGPRVTTTSLD), 794-808 (LSQSPKENTKTSMNG), and 818-835 (DSSSNSESPHQQENSVSE). Over residues 840 to 860 (LESKPKKSDETARSCDEKLQR) the composition is skewed to basic and acidic residues. Residues 938–954 (TETTPQLSPKSNESNTP) are compositionally biased toward polar residues. A compositionally biased stretch (low complexity) spans 1228–1243 (PSSQSSEQSVSSSAAQ). Residues Cys2041, Cys2045, Cys2054, and Cys2057 each coordinate Zn(2+). [4Fe-4S] cluster contacts are provided by Cys2086, Cys2089, Cys2098, and Cys2103. Residues 2086-2103 (CQACCGRLGSLQCDSLDC) carry the CysB motif motif.

The protein belongs to the DNA polymerase type-B family. In terms of assembly, catalytic subunit of the zeta DNA polymerase complex, which consists of PolZ1/DNApol-zeta and the accessory component PolZ2/Rev7. Interacts with the apurinic/apyrimidinic (AP) endonuclease Rrp1; the interaction is likely indirect and mediated via PolZ2. Requires [4Fe-4S] cluster as cofactor.

It carries out the reaction DNA(n) + a 2'-deoxyribonucleoside 5'-triphosphate = DNA(n+1) + diphosphate. Its activity is regulated as follows. Inhibited by tetracyclic diterpene antibiotic aphidicolin. Its function is as follows. As the catalytic subunit of the DNA polymerase zeta complex, plays a crucial role in translesion DNA synthesis (TLS) and various DNA repair mechanisms. Lacks an intrinsic 3'-5' exonuclease activity and thus has no proofreading function. During homologous recombination (HR) repair, has a overlapping role with the error-prone translesion polymerase eta to initiate repair synthesis which is completed by end joining or another polymerase that can bind and reinitiate synthesis. May participate in the Rrp1-dependent base excision repair (BER) pathway responsible for repair of DNA lesions that gives rise to apurinic/apyrimidinic (AP) sites. Unlike mammalian orthologs, it is not an error-prone polymerase. The protein is DNA polymerase zeta catalytic subunit of Drosophila melanogaster (Fruit fly).